A 614-amino-acid chain; its full sequence is FAD-linked oxidoreductase ffsJ (614 aa).

An N-terminal signal peptide occupies residues 1–19 (MRLTRALTPAILALPAAHA). Residues asparagine 30, asparagine 53, asparagine 72, and asparagine 114 are each glycosylated (N-linked (GlcNAc...) asparagine). The 183-residue stretch at 119-301 (TGSLPAYYID…LSSTHRVEPE (183 aa)) folds into the FAD-binding PCMH-type domain. Residues asparagine 314, asparagine 329, asparagine 461, asparagine 465, asparagine 478, and asparagine 514 are each glycosylated (N-linked (GlcNAc...) asparagine). The tract at residues 453–495 (NGHGRSNNNNSNNSSTSTSTSTSSKNGSVKPYAYGGKETTSST) is disordered. Positions 456–480 (GRSNNNNSNNSSTSTSTSTSSKNGS) are enriched in low complexity.

This sequence belongs to the oxygen-dependent FAD-linked oxidoreductase family. FAD is required as a cofactor.

It participates in mycotoxin biosynthesis. Functionally, FAD-linked oxidoreductase; part of the gene cluster that mediates the biosynthesis of the cytotoxic leucine-containing cytochalasans, including aspochalasin C, aspochalasin E, TMC-169, flavichalasine F, aspergillin PZ, aspochalasin M and flavichalasine G. The first step in the pathway is catalyzed by the hybrid PKS-NRPS ffsA that utilizes 8 units of malonyl-CoA to iteratively assemble the octaketide chain before addition of L-leucine by the C-terminal NRPS modules. Because ffsA lacks a designated enoylreductase (ER) domain, the required activity is provided the enoyl reductase fssC. The methyltransferase (MT) domain of ffsA catalyzes the alpha-methylation at C10 and C14 using S-adenosyl-L-methionine as the methyl-donating cosubstrate. Reduction by the hydrolyase ffsE, followed by dehydration and intra-molecular Diels-Alder cyclization by the Diels-Alderase ffsF then yield the required isoindolone-fused macrocycle. A number of oxidative steps catalyzed by the tailoring cytochrome P450 monooxygenase ffsD, the FAD-linked oxidoreductase ffsJ and the short-chain dehydrogenase/reductase ffsI, are further required to afford the final products. This chain is FAD-linked oxidoreductase ffsJ, found in Aspergillus flavipes.